Here is a 92-residue protein sequence, read N- to C-terminus: UPF0223 protein SERP0684 (92 aa).

This sequence belongs to the UPF0223 family.

This chain is UPF0223 protein SERP0684, found in Staphylococcus epidermidis (strain ATCC 35984 / DSM 28319 / BCRC 17069 / CCUG 31568 / BM 3577 / RP62A).